The primary structure comprises 128 residues: Sulfurtransferase TusD (128 aa).

Cys-78 (cysteine persulfide intermediate) is an active-site residue.

The protein belongs to the DsrE/TusD family. In terms of assembly, heterohexamer, formed by a dimer of trimers. The hexameric TusBCD complex contains 2 copies each of TusB, TusC and TusD. The TusBCD complex interacts with TusE.

It localises to the cytoplasm. In terms of biological role, part of a sulfur-relay system required for 2-thiolation of 5-methylaminomethyl-2-thiouridine (mnm(5)s(2)U) at tRNA wobble positions. Accepts sulfur from TusA and transfers it in turn to TusE. This is Sulfurtransferase TusD from Salmonella arizonae (strain ATCC BAA-731 / CDC346-86 / RSK2980).